A 178-amino-acid chain; its full sequence is Ribosome rescue factor SmrB (178 aa).

A Smr domain is found at 99–174; the sequence is LDLHGLTQMQ…GNAALLILIE (76 aa).

It belongs to the SmrB family. As to quaternary structure, associates with collided ribosomes, but not with correctly translating polysomes.

In terms of biological role, acts as a ribosome collision sensor. Detects stalled/collided disomes (pairs of ribosomes where the leading ribosome is stalled and a second ribosome has collided with it) and endonucleolytically cleaves mRNA at the 5' boundary of the stalled ribosome. Stalled/collided disomes form a new interface (primarily via the 30S subunits) that binds SmrB. Cleaved mRNA becomes available for tmRNA ligation, leading to ribosomal subunit dissociation and rescue of stalled ribosomes. This chain is Ribosome rescue factor SmrB, found in Photorhabdus laumondii subsp. laumondii (strain DSM 15139 / CIP 105565 / TT01) (Photorhabdus luminescens subsp. laumondii).